The sequence spans 291 residues: B-lymphocyte antigen CD20 (291 aa).

Residues 1 to 44 are Cytoplasmic-facing; sequence MSGPFPAEPTKGPLAMQPAPKVNLKRTSSLVGPTQSFFMRESKA. At Ser-29 the chain carries Phosphoserine. A helical transmembrane segment spans residues 45-65; it reads LGAVQIMNGLFHITLGGLLMI. Residues 66 to 68 lie on the Extracellular side of the membrane; the sequence is PTG. Residues 69-89 traverse the membrane as a helical segment; sequence VFAPICLSVWYPLWGGIMYII. The Cytoplasmic portion of the chain corresponds to 90 to 111; it reads SGSLLAAAAEKTSRKSLVKAKV. The helical transmembrane segment at 112 to 132 threads the bilayer; that stretch reads IMSSLSLFAAISGIILSIMDI. Topologically, residues 133–182 are extracellular; the sequence is LNMTLSHFLKMRRLELIQTSKPYVDIYDCEPSNSSEKNSPSTQYCNSIQS. Residues 183 to 203 traverse the membrane as a helical segment; the sequence is VFLGILSAMLISAFFQKLVTA. Topologically, residues 204–291 are cytoplasmic; the sequence is GIVENEWKRM…SLPVENEIAP (88 aa). Cys-214 carries the S-palmitoyl cysteine lipid modification. Ser-219 is subject to Phosphoserine. Thr-233 is modified (phosphothreonine). Residues 261–270 are compositionally biased toward acidic residues; that stretch reads VQEEEEEEAE. The disordered stretch occupies residues 261–291; sequence VQEEEEEEAEINFPAPPQEQESLPVENEIAP.

It belongs to the MS4A family. As to quaternary structure, forms homotetramers. Interacts with the heavy and light chains of cell surface IgM, the antigen-binding components of the BCR. Post-translationally, phosphorylated.

The protein localises to the cell membrane. In terms of biological role, B-lymphocyte-specific membrane protein that plays a role in the regulation of cellular calcium influx necessary for the development, differentiation, and activation of B-lymphocytes. Functions as a store-operated calcium (SOC) channel component promoting calcium influx after activation by the B-cell receptor/BCR. This chain is B-lymphocyte antigen CD20 (Ms4a1), found in Mus musculus (Mouse).